Reading from the N-terminus, the 459-residue chain is Cysteine--tRNA ligase (459 aa).

Cys-29 serves as a coordination point for Zn(2+). The 'HIGH' region signature appears at 31 to 41 (MTVYDLCHLGH). Zn(2+) contacts are provided by Cys-213, His-238, and Glu-242. The 'KMSKS' region motif lies at 270–274 (KMSKS). Lys-273 contributes to the ATP binding site.

The protein belongs to the class-I aminoacyl-tRNA synthetase family. As to quaternary structure, monomer. Zn(2+) is required as a cofactor.

The protein resides in the cytoplasm. It catalyses the reaction tRNA(Cys) + L-cysteine + ATP = L-cysteinyl-tRNA(Cys) + AMP + diphosphate. This chain is Cysteine--tRNA ligase, found in Variovorax paradoxus (strain S110).